A 412-amino-acid polypeptide reads, in one-letter code: Protein arginine N-methyltransferase 2 (412 aa).

Positions 48–65 (EKNRNGDKEFRESTDDNK) are enriched in basic and acidic residues. Disordered stretches follow at residues 48 to 69 (EKNR…TSNT) and 169 to 189 (SVQT…DDAT). Phosphoserine is present on residues Ser181 and Ser184. Positions 189-412 (TAANQQVYLK…YYYHPRITFA (224 aa)) constitute an RMT2 domain. S-adenosyl-L-methionine-binding positions include Tyr196, Met226, 250-255 (FGMGII), 271-273 (EAH), 298-299 (WQ), and Asp319.

This sequence belongs to the class I-like SAM-binding methyltransferase superfamily. RMT2 methyltransferase family. Monomer. Interacts with nucleoporins NUP49, NUP57 and NUP100.

The protein localises to the cytoplasm. It is found in the nucleus. S-adenosyl-L-methionine-dependent protein-arginine N-methyltransferase that methylates the delta-nitrogen atom of arginine residues to form N5-methylarginine (type IV) in target proteins. Monomethylates ribosomal protein L12 (RPL12A/RPL12B) at 'Arg-67'. The protein is Protein arginine N-methyltransferase 2 of Saccharomyces cerevisiae (strain ATCC 204508 / S288c) (Baker's yeast).